The sequence spans 808 residues: Transcription activator of gluconeogenesis PAAG_01030 (808 aa).

The disordered stretch occupies residues 1 to 90; it reads MTSSVRNGSP…SAKDPLRPRR (90 aa). Residues 69–83 are compositionally biased toward low complexity; sequence STSSTAASANNASAK. A DNA-binding region (zn(2)-C6 fungal-type) is located at residues 97 to 125; it reads CFACQRAHLTCGDERPCQRCIKRGLQDTC. Residues 158–170 show a composition bias toward polar residues; sequence AARNKVNSNSQQR. Disordered regions lie at residues 158 to 203, 236 to 285, 322 to 387, 442 to 461, and 598 to 629; these read AARN…FSTP, SAFQ…YGST, GAGD…IYNQ, PPTNTQHQQQPQPPRISTPS, and TGGSSSSGVSSRGSSTYNSRNSATTTVMDNQS. Residues 171–188 show a composition bias toward low complexity; it reads NGTNSNSDNNSTNTNSNN. 4 stretches are compositionally biased toward polar residues: residues 189–203, 248–279, 339–359, and 377–387; these read KPSHQDVSTNFFSTP, FDLSSNPQNHTLSPSIAQNSGTTPSSSASQNP, GRSSGTFTVQNFGEGSSNQSP, and GPTNPRNIYNQ. Composition is skewed to low complexity over residues 442-451 and 598-619; these read PPTNTQHQQQ and TGGSSSSGVSSRGSSTYNSRNS. Residues 620-629 are compositionally biased toward polar residues; sequence ATTTVMDNQS.

This sequence belongs to the ERT1/acuK family.

The protein resides in the nucleus. Transcription factor which regulates nonfermentable carbon utilization. Activator of gluconeogenetic genes. The sequence is that of Transcription activator of gluconeogenesis PAAG_01030 from Paracoccidioides lutzii (strain ATCC MYA-826 / Pb01) (Paracoccidioides brasiliensis).